We begin with the raw amino-acid sequence, 218 residues long: 3,4-dihydroxy-2-butanone 4-phosphate synthase (218 aa).

Residues 38–39 (RE), aspartate 43, 151–155 (RRGHT), and glutamate 175 contribute to the D-ribulose 5-phosphate site. Glutamate 39 contacts Mg(2+). A Mg(2+)-binding site is contributed by histidine 154.

The protein belongs to the DHBP synthase family. As to quaternary structure, homodimer. The cofactor is Mg(2+). It depends on Mn(2+) as a cofactor.

The enzyme catalyses D-ribulose 5-phosphate = (2S)-2-hydroxy-3-oxobutyl phosphate + formate + H(+). It functions in the pathway cofactor biosynthesis; riboflavin biosynthesis; 2-hydroxy-3-oxobutyl phosphate from D-ribulose 5-phosphate: step 1/1. Its function is as follows. Catalyzes the conversion of D-ribulose 5-phosphate to formate and 3,4-dihydroxy-2-butanone 4-phosphate. This Vibrio atlanticus (strain LGP32) (Vibrio splendidus (strain Mel32)) protein is 3,4-dihydroxy-2-butanone 4-phosphate synthase.